The primary structure comprises 149 residues: MKIWVDADACPKVIRETLIRAAERTGVECTFVANHLIPLPKRDNIRALQVSSGFDIADNEIVRRTEAGDLVITADIPLADEVISKGGLALNPRGELYTKETIKARLNIRDFMDTMRASGIQTGGPAALSQTERREFANHLDRILAKRTG.

Belongs to the UPF0178 family.

The polypeptide is UPF0178 protein VC0395_A0405/VC395_0897 (Vibrio cholerae serotype O1 (strain ATCC 39541 / Classical Ogawa 395 / O395)).